We begin with the raw amino-acid sequence, 25 residues long: Cytochrome c oxidase polypeptide VIIc (25 aa).

Residues 1–25 (SHYSEGPGQNLPFSVQNKXRLLGMM) are disordered.

Belongs to the cytochrome c oxidase VIIc family. As to quaternary structure, component of the cytochrome c oxidase (complex IV, CIV), a multisubunit enzyme composed of 14 subunits. The complex is composed of a catalytic core of 3 subunits MT-CO1, MT-CO2 and MT-CO3, encoded in the mitochondrial DNA, and 11 supernumerary subunits COX4I, COX5A, COX5B, COX6A, COX6B, COX6C, COX7A, COX7B, COX7C, COX8 and NDUFA4, which are encoded in the nuclear genome. The complex exists as a monomer or a dimer and forms supercomplexes (SCs) in the inner mitochondrial membrane with NADH-ubiquinone oxidoreductase (complex I, CI) and ubiquinol-cytochrome c oxidoreductase (cytochrome b-c1 complex, complex III, CIII), resulting in different assemblies (supercomplex SCI(1)III(2)IV(1) and megacomplex MCI(2)III(2)IV(2)). Interacts with RAB5IF.

It localises to the mitochondrion inner membrane. The protein operates within energy metabolism; oxidative phosphorylation. In terms of biological role, component of the cytochrome c oxidase, the last enzyme in the mitochondrial electron transport chain which drives oxidative phosphorylation. The respiratory chain contains 3 multisubunit complexes succinate dehydrogenase (complex II, CII), ubiquinol-cytochrome c oxidoreductase (cytochrome b-c1 complex, complex III, CIII) and cytochrome c oxidase (complex IV, CIV), that cooperate to transfer electrons derived from NADH and succinate to molecular oxygen, creating an electrochemical gradient over the inner membrane that drives transmembrane transport and the ATP synthase. Cytochrome c oxidase is the component of the respiratory chain that catalyzes the reduction of oxygen to water. Electrons originating from reduced cytochrome c in the intermembrane space (IMS) are transferred via the dinuclear copper A center (CU(A)) of subunit 2 and heme A of subunit 1 to the active site in subunit 1, a binuclear center (BNC) formed by heme A3 and copper B (CU(B)). The BNC reduces molecular oxygen to 2 water molecules using 4 electrons from cytochrome c in the IMS and 4 protons from the mitochondrial matrix. The protein is Cytochrome c oxidase polypeptide VIIc of Oncorhynchus mykiss (Rainbow trout).